Consider the following 81-residue polypeptide: D-alanyl carrier protein (81 aa).

The 81-residue stretch at 1–81 folds into the Carrier domain; it reads MADEAIKNGV…KIIAKVEQAQ (81 aa). Serine 39 is modified (O-(pantetheine 4'-phosphoryl)serine).

This sequence belongs to the DltC family. Post-translationally, 4'-phosphopantetheine is transferred from CoA to a specific serine of apo-DCP.

It is found in the cytoplasm. Its pathway is cell wall biogenesis; lipoteichoic acid biosynthesis. Carrier protein involved in the D-alanylation of lipoteichoic acid (LTA). The loading of thioester-linked D-alanine onto DltC is catalyzed by D-alanine--D-alanyl carrier protein ligase DltA. The DltC-carried D-alanyl group is further transferred to cell membrane phosphatidylglycerol (PG) by forming an ester bond, probably catalyzed by DltD. D-alanylation of LTA plays an important role in modulating the properties of the cell wall in Gram-positive bacteria, influencing the net charge of the cell wall. In Lacticaseibacillus rhamnosus (Lactobacillus rhamnosus), this protein is D-alanyl carrier protein.